A 117-amino-acid chain; its full sequence is UPF0102 protein RHOS4_03930 (117 aa).

Belongs to the UPF0102 family.

This Cereibacter sphaeroides (strain ATCC 17023 / DSM 158 / JCM 6121 / CCUG 31486 / LMG 2827 / NBRC 12203 / NCIMB 8253 / ATH 2.4.1.) (Rhodobacter sphaeroides) protein is UPF0102 protein RHOS4_03930.